Consider the following 427-residue polypeptide: Serine--tRNA ligase (427 aa).

231 to 233 (TAE) is a binding site for L-serine. 262–264 (RSE) provides a ligand contact to ATP. L-serine is bound at residue glutamate 285. Residue 349–352 (EISS) participates in ATP binding. Serine 385 is a binding site for L-serine.

It belongs to the class-II aminoacyl-tRNA synthetase family. Type-1 seryl-tRNA synthetase subfamily. In terms of assembly, homodimer. The tRNA molecule binds across the dimer.

It localises to the cytoplasm. The enzyme catalyses tRNA(Ser) + L-serine + ATP = L-seryl-tRNA(Ser) + AMP + diphosphate + H(+). It catalyses the reaction tRNA(Sec) + L-serine + ATP = L-seryl-tRNA(Sec) + AMP + diphosphate + H(+). It participates in aminoacyl-tRNA biosynthesis; selenocysteinyl-tRNA(Sec) biosynthesis; L-seryl-tRNA(Sec) from L-serine and tRNA(Sec): step 1/1. Its function is as follows. Catalyzes the attachment of serine to tRNA(Ser). Is also able to aminoacylate tRNA(Sec) with serine, to form the misacylated tRNA L-seryl-tRNA(Sec), which will be further converted into selenocysteinyl-tRNA(Sec). This chain is Serine--tRNA ligase, found in Exiguobacterium sp. (strain ATCC BAA-1283 / AT1b).